The primary structure comprises 137 residues: ATP synthase epsilon chain, chloroplastic (137 aa).

The protein belongs to the ATPase epsilon chain family. In terms of assembly, F-type ATPases have 2 components, CF(1) - the catalytic core - and CF(0) - the membrane proton channel. CF(1) has five subunits: alpha(3), beta(3), gamma(1), delta(1), epsilon(1). CF(0) has three main subunits: a, b and c.

The protein localises to the plastid. The protein resides in the chloroplast thylakoid membrane. In terms of biological role, produces ATP from ADP in the presence of a proton gradient across the membrane. In Agrostis stolonifera (Creeping bentgrass), this protein is ATP synthase epsilon chain, chloroplastic.